A 260-amino-acid polypeptide reads, in one-letter code: Snake venom serine protease KN5 (260 aa).

An N-terminal signal peptide occupies residues 1 to 18 (MVLIRVLANLLILQLSYA). A propeptide spanning residues 19–24 (QKSSEL) is cleaved from the precursor. The Peptidase S1 domain maps to 25 to 251 (VIGGDECNIN…HLDWIQSIIA (227 aa)). 5 disulfide bridges follow: cysteine 31–cysteine 165, cysteine 100–cysteine 258, cysteine 144–cysteine 212, cysteine 176–cysteine 191, and cysteine 202–cysteine 227. The active-site Charge relay system is histidine 67. Residue asparagine 105 is glycosylated (N-linked (GlcNAc...) asparagine). Aspartate 112 functions as the Charge relay system in the catalytic mechanism. N-linked (GlcNAc...) asparagine glycans are attached at residues asparagine 124 and asparagine 172. Serine 206 functions as the Charge relay system in the catalytic mechanism. N-linked (GlcNAc...) asparagine glycosylation is found at asparagine 213 and asparagine 255.

This sequence belongs to the peptidase S1 family. Snake venom subfamily. In terms of assembly, monomer. Expressed by the venom gland.

It is found in the secreted. Its function is as follows. Snake venom serine protease that may act in the hemostasis system of the prey. The polypeptide is Snake venom serine protease KN5 (Trimeresurus stejnegeri (Chinese green tree viper)).